Consider the following 264-residue polypeptide: GATA transcription factor 2 (264 aa).

The segment covering 29–42 has biased composition (low complexity); the sequence is SSSGGSTAATSSSS. Disordered regions lie at residues 29–57 and 96–192; these read SSSG…HHLP and NPLG…TPQW. Over residues 101-110 the composition is skewed to polar residues; it reads TMTSVKTETS. Residues 114-121 carry the Nuclear localization signal motif; sequence KPRSKRSR. Residues 155-164 are compositionally biased toward gly residues; that stretch reads SGGGGGGGGR. The GATA-type zinc-finger motif lies at 175–229; it reads GGGMRRCTHCASEKTPQWRTGPLGPKTLCNACGVRFKSGRLVPEYRPASSPTFVL.

The protein belongs to the type IV zinc-finger family. Class A subfamily. Mostly expressed in roots. Also expressed in flowers and leaves, and to a lower extent in stems.

The protein resides in the nucleus. Its function is as follows. Transcriptional activator that specifically binds 5'-GATA-3' or 5'-GAT-3' motifs within gene promoters. May be involved in the regulation of some light-responsive genes. This Arabidopsis thaliana (Mouse-ear cress) protein is GATA transcription factor 2 (GATA2).